We begin with the raw amino-acid sequence, 207 residues long: N-(5'-phosphoribosyl)anthranilate isomerase (207 aa).

This sequence belongs to the TrpF family.

The enzyme catalyses N-(5-phospho-beta-D-ribosyl)anthranilate = 1-(2-carboxyphenylamino)-1-deoxy-D-ribulose 5-phosphate. Its pathway is amino-acid biosynthesis; L-tryptophan biosynthesis; L-tryptophan from chorismate: step 3/5. The sequence is that of N-(5'-phosphoribosyl)anthranilate isomerase from Legionella pneumophila (strain Lens).